The primary structure comprises 486 residues: Membrane-bound lytic murein transglycosylase F (486 aa).

The N-terminal stretch at 1–29 (MFSPTALRPRYAKWLIATGLFLMLSGCVD) is a signal peptide. The non-LT domain stretch occupies residues 30-267 (KPNTLERVKE…RLKDRYYGHV (238 aa)). The interval 268-486 (DVLGYMGATT…SKPAQEPAPL (219 aa)) is LT domain. The active site involves E314.

The protein in the N-terminal section; belongs to the bacterial solute-binding protein 3 family. It in the C-terminal section; belongs to the transglycosylase Slt family.

The protein localises to the cell outer membrane. It catalyses the reaction Exolytic cleavage of the (1-&gt;4)-beta-glycosidic linkage between N-acetylmuramic acid (MurNAc) and N-acetylglucosamine (GlcNAc) residues in peptidoglycan, from either the reducing or the non-reducing ends of the peptidoglycan chains, with concomitant formation of a 1,6-anhydrobond in the MurNAc residue.. Its function is as follows. Murein-degrading enzyme that degrades murein glycan strands and insoluble, high-molecular weight murein sacculi, with the concomitant formation of a 1,6-anhydromuramoyl product. Lytic transglycosylases (LTs) play an integral role in the metabolism of the peptidoglycan (PG) sacculus. Their lytic action creates space within the PG sacculus to allow for its expansion as well as for the insertion of various structures such as secretion systems and flagella. This Pseudomonas fluorescens (strain Pf0-1) protein is Membrane-bound lytic murein transglycosylase F.